A 221-amino-acid polypeptide reads, in one-letter code: SIN3-HDAC complex-associated factor (221 aa).

Disordered stretches follow at residues 110-153 and 201-221; these read KLQK…ASSS and AAAE…TQEW. Over residues 111 to 121 the composition is skewed to basic and acidic residues; it reads LQKEFKRHNSD. Positions 124-135 are enriched in low complexity; that stretch reads STTSSASPAQSP. Positions 136-153 are enriched in polar residues; that stretch reads CYSNQSDEGSDTEMASSS.

The protein belongs to the SINHCAF family. As to quaternary structure, component of the Sin3/HDAC corepressor complex at least composed of BRMS1, BRMS1L, ING2, SAP30, SAP30L, HDAC1. Found in a complex composed of at least SINHCAF, SIN3A, HDAC1, SAP30, RBBP4, OGT and TET1. Interacts with SIN3A and OGT. As to expression, embryonic stem cells (at protein level).

Its subcellular location is the nucleus. Its function is as follows. Subunit of the Sin3 deacetylase complex (Sin3/HDAC), this subunit is important for the repression of genes encoding components of the TGF-beta signaling pathway. Core component of a SIN3A complex (composed of at least SINHCAF, SIN3A, HDAC1, SAP30, RBBP4, OGT and TET1) present in embryonic stem (ES) cells. Promotes the stability of SIN3A and its presence on chromatin and is essential for maintaining the potential of ES cells to proliferate rapidly, while ensuring a short G1-phase of the cell cycle, thereby preventing premature lineage priming. The chain is SIN3-HDAC complex-associated factor (Sinhcaf) from Mus musculus (Mouse).